The primary structure comprises 46 residues: Escargot/snail protein homolog (46 aa).

C2H2-type zinc fingers lie at residues 1 to 4, 9 to 30, and 36 to 46; these read HIAH, CKCPICGKPFAPWLLQGHIRTH, and SVCQHCNRAFA.

Belongs to the snail C2H2-type zinc-finger protein family.

It localises to the nucleus. The protein is Escargot/snail protein homolog of Lithobius forficatus (Centipede).